The following is a 179-amino-acid chain: Large ribosomal subunit protein uL5 (179 aa).

Belongs to the universal ribosomal protein uL5 family. Part of the 50S ribosomal subunit; part of the 5S rRNA/L5/L18/L25 subcomplex. Contacts the 5S rRNA and the P site tRNA. Forms a bridge to the 30S subunit in the 70S ribosome.

Functionally, this is one of the proteins that bind and probably mediate the attachment of the 5S RNA into the large ribosomal subunit, where it forms part of the central protuberance. In the 70S ribosome it contacts protein S13 of the 30S subunit (bridge B1b), connecting the 2 subunits; this bridge is implicated in subunit movement. Contacts the P site tRNA; the 5S rRNA and some of its associated proteins might help stabilize positioning of ribosome-bound tRNAs. The protein is Large ribosomal subunit protein uL5 of Clostridium botulinum (strain Alaska E43 / Type E3).